The following is a 458-amino-acid chain: UDP-N-acetylmuramoylalanine--D-glutamate ligase (458 aa).

124–130 is a binding site for ATP; that stretch reads GSDGKTT.

Belongs to the MurCDEF family.

It localises to the cytoplasm. The enzyme catalyses UDP-N-acetyl-alpha-D-muramoyl-L-alanine + D-glutamate + ATP = UDP-N-acetyl-alpha-D-muramoyl-L-alanyl-D-glutamate + ADP + phosphate + H(+). The protein operates within cell wall biogenesis; peptidoglycan biosynthesis. In terms of biological role, cell wall formation. Catalyzes the addition of glutamate to the nucleotide precursor UDP-N-acetylmuramoyl-L-alanine (UMA). The protein is UDP-N-acetylmuramoylalanine--D-glutamate ligase of Clostridium beijerinckii (strain ATCC 51743 / NCIMB 8052) (Clostridium acetobutylicum).